The chain runs to 184 residues: CDP-archaeol synthase (184 aa).

Transmembrane regions (helical) follow at residues 4-24 (IIMV…NPGA), 54-74 (FIGG…IIYI), 86-106 (IISA…GDIT), 122-142 (GSLL…FIFA), and 145-165 (FFLE…LTPP).

It belongs to the CDP-archaeol synthase family. Mg(2+) serves as cofactor.

It localises to the cell membrane. It carries out the reaction 2,3-bis-O-(geranylgeranyl)-sn-glycerol 1-phosphate + CTP + H(+) = CDP-2,3-bis-O-(geranylgeranyl)-sn-glycerol + diphosphate. The protein operates within membrane lipid metabolism; glycerophospholipid metabolism. Functionally, catalyzes the formation of CDP-2,3-bis-(O-geranylgeranyl)-sn-glycerol (CDP-archaeol) from 2,3-bis-(O-geranylgeranyl)-sn-glycerol 1-phosphate (DGGGP) and CTP. This reaction is the third ether-bond-formation step in the biosynthesis of archaeal membrane lipids. This Picrophilus torridus (strain ATCC 700027 / DSM 9790 / JCM 10055 / NBRC 100828 / KAW 2/3) protein is CDP-archaeol synthase.